A 102-amino-acid chain; its full sequence is C-X-C motif chemokine 10 (102 aa).

An N-terminal signal peptide occupies residues Met-1–Gly-19. Arg-24 bears the Citrulline mark. 2 disulfide bridges follow: Cys-28-Cys-55 and Cys-30-Cys-72.

The protein belongs to the intercrine alpha (chemokine CxC) family. Monomer, dimer, and tetramer. Interacts with CXCR3 (via N-terminus).

The protein resides in the secreted. Its function is as follows. Pro-inflammatory cytokine that is involved in a wide variety of processes such as chemotaxis, differentiation, and activation of peripheral immune cells, regulation of cell growth, apoptosis and modulation of angiostatic effects. Plays thereby an important role during viral infections by stimulating the activation and migration of immune cells to the infected sites. Mechanistically, binding of CXCL10 to the CXCR3 receptor activates G protein-mediated signaling and results in downstream activation of phospholipase C-dependent pathway, an increase in intracellular calcium production and actin reorganization. In turn, recruitment of activated Th1 lymphocytes occurs at sites of inflammation. Activation of the CXCL10/CXCR3 axis also plays an important role in neurons in response to brain injury for activating microglia, the resident macrophage population of the central nervous system, and directing them to the lesion site. This recruitment is an essential element for neuronal reorganization. The polypeptide is C-X-C motif chemokine 10 (CXCL10) (Bos taurus (Bovine)).